Consider the following 499-residue polypeptide: ATP synthase subunit alpha, chloroplastic (499 aa).

170-177 (GDRQTGKT) lines the ATP pocket.

The protein belongs to the ATPase alpha/beta chains family. F-type ATPases have 2 components, CF(1) - the catalytic core - and CF(0) - the membrane proton channel. CF(1) has five subunits: alpha(3), beta(3), gamma(1), delta(1), epsilon(1). CF(0) has four main subunits: a, b, b' and c.

It localises to the plastid. Its subcellular location is the chloroplast thylakoid membrane. The catalysed reaction is ATP + H2O + 4 H(+)(in) = ADP + phosphate + 5 H(+)(out). In terms of biological role, produces ATP from ADP in the presence of a proton gradient across the membrane. The alpha chain is a regulatory subunit. The sequence is that of ATP synthase subunit alpha, chloroplastic from Emiliania huxleyi (Coccolithophore).